Consider the following 223-residue polypeptide: Deoxyribose-phosphate aldolase (223 aa).

The Proton donor/acceptor role is filled by D89. The Schiff-base intermediate with acetaldehyde role is filled by K152. K181 acts as the Proton donor/acceptor in catalysis.

It belongs to the DeoC/FbaB aldolase family. DeoC type 1 subfamily.

Its subcellular location is the cytoplasm. It carries out the reaction 2-deoxy-D-ribose 5-phosphate = D-glyceraldehyde 3-phosphate + acetaldehyde. The protein operates within carbohydrate degradation; 2-deoxy-D-ribose 1-phosphate degradation; D-glyceraldehyde 3-phosphate and acetaldehyde from 2-deoxy-alpha-D-ribose 1-phosphate: step 2/2. Its function is as follows. Catalyzes a reversible aldol reaction between acetaldehyde and D-glyceraldehyde 3-phosphate to generate 2-deoxy-D-ribose 5-phosphate. The chain is Deoxyribose-phosphate aldolase from Listeria innocua serovar 6a (strain ATCC BAA-680 / CLIP 11262).